The primary structure comprises 601 residues: Proteasome-associated ATPase (601 aa).

Over residues 1–15 (MSGPRSGSGSGGSTG) the composition is skewed to gly residues. The disordered stretch occupies residues 1–31 (MSGPRSGSGSGGSTGRPGDAESRRSAYEKEA). A compositionally biased stretch (basic and acidic residues) spans 18-31 (GDAESRRSAYEKEA). The stretch at 18–106 (GDAESRRSAY…LKEEVDRLAQ (89 aa)) forms a coiled coil. 289–294 (GCGKTL) serves as a coordination point for ATP. The interval 600–601 (YL) is docks into pockets in the proteasome alpha-ring.

This sequence belongs to the AAA ATPase family. As to quaternary structure, homohexamer. Assembles into a hexameric ring structure that caps the 20S proteasome core. Strongly interacts with the prokaryotic ubiquitin-like protein Pup through a hydrophobic interface; the interacting region of ARC lies in its N-terminal coiled-coil domain. There is one Pup binding site per ARC hexamer ring. Upon ATP-binding, the C-terminus of ARC interacts with the alpha-rings of the proteasome core, possibly by binding to the intersubunit pockets.

Its pathway is protein degradation; proteasomal Pup-dependent pathway. In terms of biological role, ATPase which is responsible for recognizing, binding, unfolding and translocation of pupylated proteins into the bacterial 20S proteasome core particle. May be essential for opening the gate of the 20S proteasome via an interaction with its C-terminus, thereby allowing substrate entry and access to the site of proteolysis. Thus, the C-termini of the proteasomal ATPase may function like a 'key in a lock' to induce gate opening and therefore regulate proteolysis. The sequence is that of Proteasome-associated ATPase from Frankia alni (strain DSM 45986 / CECT 9034 / ACN14a).